The chain runs to 179 residues: Small ribosomal subunit protein uS5 (179 aa).

Residues 22–85 (MIEKLVAVNR…EYARKRMSNV (64 aa)) enclose the S5 DRBM domain.

This sequence belongs to the universal ribosomal protein uS5 family. Part of the 30S ribosomal subunit. Contacts proteins S4 and S8.

Its function is as follows. With S4 and S12 plays an important role in translational accuracy. In terms of biological role, located at the back of the 30S subunit body where it stabilizes the conformation of the head with respect to the body. The polypeptide is Small ribosomal subunit protein uS5 (Xylella fastidiosa (strain M23)).